A 297-amino-acid chain; its full sequence is UDP-N-acetylenolpyruvoylglucosamine reductase (297 aa).

The FAD-binding PCMH-type domain occupies 24–189; it reads KVGGNAEIFF…LKAIFKVNKG (166 aa). Arg169 is an active-site residue. Catalysis depends on Ser218, which acts as the Proton donor. The active site involves Glu289.

Belongs to the MurB family. The cofactor is FAD.

The protein resides in the cytoplasm. It catalyses the reaction UDP-N-acetyl-alpha-D-muramate + NADP(+) = UDP-N-acetyl-3-O-(1-carboxyvinyl)-alpha-D-glucosamine + NADPH + H(+). Its pathway is cell wall biogenesis; peptidoglycan biosynthesis. Functionally, cell wall formation. This chain is UDP-N-acetylenolpyruvoylglucosamine reductase, found in Rickettsia canadensis (strain McKiel).